The chain runs to 713 residues: MATGQDRVVALVDMDCFFVQVEQRQNPHLRNKPCAVVQYKSWKGGGIIAVSYEARAFGVTRSMWADDAKKLCPDLLLAQVRESRGKANLTKYREASVEVMEIMSRFAVIERASIDEAYVDLTSAVQERLQKLQGQPISADLLPSTYIEGLPQGPTTAEETVQKEGMRKQGLFQWLDSLQIDNLTSPDLQLTVGAVIVEEMRAAIERETGFQCSAGISHNKVLAKLACGLNKPNRQTLVSHGSVPQLFSQMPIRKIRSLGGKLGASVIEILGIEYMGELTQFTESQLQSHFGEKNGSWLYAMCRGIEHDPVKPRQLPKTIGCSKNFPGKTALATREQVQWWLLQLAQELEERLTKDRNDNDRVATQLVVSIRVQGDKRLSSLRRCCALTRYDAHKMSHDAFTVIKNCNTSGIQTEWSPPLTMLFLCATKFSASAPSSSTDITSFLSSDPSSLPKVPVTSSEAKTQGSGPAVTATKKATTSLESFFQKAAERQKVKEASLSSLTAPTQAPMSNSPSKPSLPFQTSQSTGTEPFFKQKSLLLKQKQLNNSSVSSPQQNPWSNCKALPNSLPTEYPGCVPVCEGVSKLEESSKATPAEMDLAHNSQSMHASSASKSVLEVTQKATPNPSLLAAEDQVPCEKCGSLVPVWDMPEHMDYHFALELQKSFLQPHSSNPQVVSAVSHQGKRNPKSPLACTNKRPRPEGMQTLESFFKPLTH.

Positions 9-259 constitute a UmuC domain; it reads VALVDMDCFF…MPIRKIRSLG (251 aa). Asp13 and Met14 together coordinate Mg(2+). Residues Asp13 and Met14 each contribute to the Mn(2+) site. A 2'-deoxyribonucleoside 5'-triphosphate is bound at residue Arg61. Positions 115 and 116 each coordinate Mg(2+). Mn(2+) is bound by residues Asp115 and Glu116. Disordered regions lie at residues 441–472 and 495–527; these read TSFLSSDPSSLPKVPVTSSEAKTQGSGPAVTA and EASLSSLTAPTQAPMSNSPSKPSLPFQTSQSTG. Composition is skewed to polar residues over residues 456 to 466 and 497 to 527; these read VTSSEAKTQGS and SLSSLTAPTQAPMSNSPSKPSLPFQTSQSTG. The segment at 628 to 662 adopts a UBZ3-type zinc-finger fold; that stretch reads AAEDQVPCEKCGSLVPVWDMPEHMDYHFALELQKS. Zn(2+) contacts are provided by Cys635, Cys638, His650, and His654. The disordered stretch occupies residues 677 to 705; it reads VSHQGKRNPKSPLACTNKRPRPEGMQTLE. Glycyl lysine isopeptide (Lys-Gly) (interchain with G-Cter in ubiquitin) cross-links involve residues Lys682, Lys686, and Lys694. Residues 701–708 carry the PIP-box motif; it reads MQTLESFF. Lys709 participates in a covalent cross-link: Glycyl lysine isopeptide (Lys-Gly) (interchain with G-Cter in ubiquitin).

The protein belongs to the DNA polymerase type-Y family. In terms of assembly, interacts with REV1. Interacts with monoubiquitinated PCNA, but not unmodified PCNA. Interacts with POLI; this interaction targets POLI to the replication machinery. Interacts with PALB2 and BRCA2; the interactions are direct and are required to sustain the recruitment of POLH at blocked replication forks and to stimulate POLH-dependent DNA synthesis on D loop substrates. Interacts (via C-terminus) with TRAIP. Interacts with ubiquitin. Interacts with POLDIP2. Mg(2+) is required as a cofactor. It depends on Mn(2+) as a cofactor. Post-translationally, monoubiquitinated by RCHY1/PIRH2. Ubiquitination depends on integrity of the UBZ3-type zinc finger domain and is enhanced by TRAIP. Ubiquitination inhibits the ability of PolH to interact with PCNA and to bypass UV-induced lesions.

The protein resides in the nucleus. It carries out the reaction DNA(n) + a 2'-deoxyribonucleoside 5'-triphosphate = DNA(n+1) + diphosphate. The enzyme in complex with the DNA substrate binds a third divalent metal cation. The binding of this third divalent cation, which is coordinated by water molecules and two oxygen atoms from DNA and dNTP, is essential for catalyzing the DNA synthesis. In terms of biological role, DNA polymerase specifically involved in the DNA repair by translesion synthesis (TLS). Due to low processivity on both damaged and normal DNA, cooperates with the heterotetrameric (REV3L, REV7, POLD2 and POLD3) POLZ complex for complete bypass of DNA lesions. Inserts one or 2 nucleotide(s) opposite the lesion, the primer is further extended by the tetrameric POLZ complex. In the case of 1,2-intrastrand d(GpG)-cisplatin cross-link, inserts dCTP opposite the 3' guanine. Particularly important for the repair of UV-induced pyrimidine dimers. Although inserts the correct base, may cause base transitions and transversions depending upon the context. May play a role in hypermutation at immunoglobulin genes. Forms a Schiff base with 5'-deoxyribose phosphate at abasic sites, but does not have any lyase activity, preventing the release of the 5'-deoxyribose phosphate (5'-dRP) residue. This covalent trapping of the enzyme by the 5'-dRP residue inhibits its DNA synthetic activity during base excision repair, thereby avoiding high incidence of mutagenesis. Targets POLI to replication foci. In Homo sapiens (Human), this protein is DNA polymerase eta (POLH).